Reading from the N-terminus, the 256-residue chain is Dihydromonacolin L-[lovastatin nonaketide synthase] thioesterase (256 aa).

Catalysis depends on charge relay system residues S122, D201, and H229.

It belongs to the LovG family.

The catalysed reaction is dihydromonacolin L-[lovastatin nonaketide synthase] + H2O = holo-[lovastatin nonaketide synthase] + dihydromonacolin L carboxylate + H(+). The protein operates within polyketide biosynthesis; lovastatin biosynthesis. In terms of biological role, esterase; part of the gene cluster that mediates the biosynthesis of lovastatin (also known as mevinolin, mevacor or monacolin K), a hypolipidemic inhibitor of (3S)-hydroxymethylglutaryl-coenzyme A (HMG-CoA) reductase (HMGR). The first step in the biosynthesis of lovastatin is the production of dihydromonacolin L acid by the lovastatin nonaketide synthase lovB and the trans-acting enoyl reductase lovC via condensation of one acetyl-CoA unit and 8 malonyl-CoA units. Dihydromonacolin L acid is released from lovB by the thioesterase lovG. Next, dihydromonacolin L acid is oxidized by the dihydromonacolin L monooxygenase lovA twice to form monacolin J acid. The 2-methylbutyrate moiety of lovastatin is synthesized by the lovastatin diketide synthase lovF via condensation of one acetyl-CoA unit and one malonyl-CoA unit. Finally, the covalent attachment of this moiety to monacolin J acid is catalyzed by the transesterase lovD to yield lovastatin. LovD has broad substrate specificity and can also convert monacolin J to simvastatin using alpha-dimethylbutanoyl-S-methyl-3-mercaptopropionate (DMB-S-MMP) as the thioester acyl donor, and can also catalyze the reverse reaction and function as hydrolase in vitro. LovD has much higher activity with LovF-bound 2-methylbutanoate than with free diketide substrates. Its function is as follows. Esterase that catalyzes the release of covalently bound dihydromonacolin L from LovB during lovastatin biosynthesis. This chain is Dihydromonacolin L-[lovastatin nonaketide synthase] thioesterase, found in Aspergillus terreus.